Consider the following 677-residue polypeptide: Methionine--tRNA ligase (677 aa).

Positions 14-24 (PYANGAIHLGH) match the 'HIGH' region motif. Residues Cys145, Cys148, Cys158, and Cys161 each coordinate Zn(2+). Positions 330 to 334 (KMSKS) match the 'KMSKS' region motif. Lys333 provides a ligand contact to ATP. In terms of domain architecture, tRNA-binding spans 576 to 677 (DFAKVDLRVA…EGALPGMRVM (102 aa)).

Belongs to the class-I aminoacyl-tRNA synthetase family. MetG type 1 subfamily. In terms of assembly, homodimer. The cofactor is Zn(2+).

The protein localises to the cytoplasm. It carries out the reaction tRNA(Met) + L-methionine + ATP = L-methionyl-tRNA(Met) + AMP + diphosphate. Its function is as follows. Is required not only for elongation of protein synthesis but also for the initiation of all mRNA translation through initiator tRNA(fMet) aminoacylation. The protein is Methionine--tRNA ligase of Saccharophagus degradans (strain 2-40 / ATCC 43961 / DSM 17024).